The chain runs to 227 residues: tRNA pseudouridine synthase B (227 aa).

Asp-42 acts as the Nucleophile in catalysis.

The protein belongs to the pseudouridine synthase TruB family. Type 1 subfamily.

The catalysed reaction is uridine(55) in tRNA = pseudouridine(55) in tRNA. Its function is as follows. Responsible for synthesis of pseudouridine from uracil-55 in the psi GC loop of transfer RNAs. This Ureaplasma parvum serovar 3 (strain ATCC 27815 / 27 / NCTC 11736) protein is tRNA pseudouridine synthase B.